The following is a 222-amino-acid chain: Probable GTP-binding protein EngB (222 aa).

The region spanning 22–197 (TSAEIAFVGR…ETVVAGWFAG (176 aa)) is the EngB-type G domain. Ser37 and Thr59 together coordinate Mg(2+). A disordered region spans residues 201–222 (RQADELTDGEPDDRTPDPDSAS). Positions 212–222 (DDRTPDPDSAS) are enriched in basic and acidic residues.

This sequence belongs to the TRAFAC class TrmE-Era-EngA-EngB-Septin-like GTPase superfamily. EngB GTPase family. Mg(2+) is required as a cofactor.

Functionally, necessary for normal cell division and for the maintenance of normal septation. This is Probable GTP-binding protein EngB from Laribacter hongkongensis (strain HLHK9).